A 473-amino-acid chain; its full sequence is 3-isopropylmalate dehydratase large subunit (473 aa).

Positions 353, 414, and 417 each coordinate [4Fe-4S] cluster.

This sequence belongs to the aconitase/IPM isomerase family. LeuC type 1 subfamily. As to quaternary structure, heterodimer of LeuC and LeuD. The cofactor is [4Fe-4S] cluster.

It catalyses the reaction (2R,3S)-3-isopropylmalate = (2S)-2-isopropylmalate. It participates in amino-acid biosynthesis; L-leucine biosynthesis; L-leucine from 3-methyl-2-oxobutanoate: step 2/4. Its function is as follows. Catalyzes the isomerization between 2-isopropylmalate and 3-isopropylmalate, via the formation of 2-isopropylmaleate. This chain is 3-isopropylmalate dehydratase large subunit, found in Cellvibrio japonicus (strain Ueda107) (Pseudomonas fluorescens subsp. cellulosa).